Reading from the N-terminus, the 426-residue chain is Serine--tRNA ligase (426 aa).

Residue 233-235 (TAE) participates in L-serine binding. ATP is bound at residue 264–266 (RRE). Residue E287 participates in L-serine binding. 351–354 (EISS) is an ATP binding site. S386 contributes to the L-serine binding site.

This sequence belongs to the class-II aminoacyl-tRNA synthetase family. Type-1 seryl-tRNA synthetase subfamily. In terms of assembly, homodimer. The tRNA molecule binds across the dimer.

Its subcellular location is the cytoplasm. The enzyme catalyses tRNA(Ser) + L-serine + ATP = L-seryl-tRNA(Ser) + AMP + diphosphate + H(+). It catalyses the reaction tRNA(Sec) + L-serine + ATP = L-seryl-tRNA(Sec) + AMP + diphosphate + H(+). It functions in the pathway aminoacyl-tRNA biosynthesis; selenocysteinyl-tRNA(Sec) biosynthesis; L-seryl-tRNA(Sec) from L-serine and tRNA(Sec): step 1/1. Catalyzes the attachment of serine to tRNA(Ser). Is also able to aminoacylate tRNA(Sec) with serine, to form the misacylated tRNA L-seryl-tRNA(Sec), which will be further converted into selenocysteinyl-tRNA(Sec). In Thermosipho africanus (strain TCF52B), this protein is Serine--tRNA ligase.